We begin with the raw amino-acid sequence, 490 residues long: GTPase Der (490 aa).

EngA-type G domains are found at residues 1 to 165 (MRIA…QIPV) and 227 to 400 (LKVA…TIAT). Residues 7–14 (GRPNVGKS), 54–58 (DTGGV), 117–120 (NKAD), 233–240 (GHPNVGKS), 280–284 (DTAGL), and 345–348 (NKWD) each bind GTP. Positions 401–485 (TKLSTSLVNK…PFDLEYKAKP (85 aa)) constitute a KH-like domain.

Belongs to the TRAFAC class TrmE-Era-EngA-EngB-Septin-like GTPase superfamily. EngA (Der) GTPase family. As to quaternary structure, associates with the 50S ribosomal subunit.

In terms of biological role, GTPase that plays an essential role in the late steps of ribosome biogenesis. The protein is GTPase Der of Chlamydia trachomatis serovar A (strain ATCC VR-571B / DSM 19440 / HAR-13).